We begin with the raw amino-acid sequence, 161 residues long: Nucleotide-binding protein Ajs_2750 (161 aa).

It belongs to the YajQ family.

Functionally, nucleotide-binding protein. The polypeptide is Nucleotide-binding protein Ajs_2750 (Acidovorax sp. (strain JS42)).